We begin with the raw amino-acid sequence, 373 residues long: Schlafen-like protein 1 (373 aa).

The tract at residues M1–P67 is disordered. Positions K247–V373 are SLFN-like fold.

It belongs to the Schlafen family. Component of the trimeric PUCH (precursor of 21U RNA 5'-end cleavage holoenzyme) complex; consisting of tofu-1, tofu-2 and either slfl-3 or slfl-4; which is required for processing of piRNA precursors. Within the complex, interacts (via N-terminus) with tofu-2 (via N-terminus); the interaction stabilizes tofu-2 and may form a functional nuclease. Within the complex, required for the interaction of tofu-2 (via N-terminus) with slfl-3 (via N-terminus). Interacts (via residues 82-172) with the PETISCO complex subunit tofu-6 (via residues 120-314); the interaction between the PETISCO and PUCH complex members enhances piRNA production in vivo. In terms of tissue distribution, expressed in the germline.

The protein resides in the cytoplasm. Component of the trimeric PUCH (precursor of 21U RNA 5'-end cleavage holoenzyme) complex, that acts as an endoribonuclease processing the 5'-end of precursor Piwi-interacting RNAs (piRNAs). The PUCH complex consists of tofu-1, tofu-2 and either slfl-3 or slfl-4, with tofu-2 exhibiting endoribonuclease activity. PUCH-mediated processing strictly requires a 7-methyl-G cap (m7 G-cap) and an uracil at position three (U3). PUCH also exhibits a strict bias for piRNA precursors with an A or G at position 1. Mature piRNA production is enhanced by the interaction of PUCH with the PETISCO complex, which is stabilizing piRNA precursors and allows their processing by PUCH. This Caenorhabditis elegans protein is Schlafen-like protein 1.